The primary structure comprises 339 residues: Anthranilate phosphoribosyltransferase (339 aa).

Residues Gly82, 85 to 86 (GD), 92 to 95 (NIST), 110 to 118 (KHGNSSISS), and Ser122 each bind 5-phospho-alpha-D-ribose 1-diphosphate. Gly82 is a binding site for anthranilate. Ser94 is a Mg(2+) binding site. An anthranilate-binding site is contributed by Asn113. Arg168 provides a ligand contact to anthranilate. Mg(2+) is bound by residues Asp227 and Glu228.

The protein belongs to the anthranilate phosphoribosyltransferase family. In terms of assembly, homodimer. The cofactor is Mg(2+).

It catalyses the reaction N-(5-phospho-beta-D-ribosyl)anthranilate + diphosphate = 5-phospho-alpha-D-ribose 1-diphosphate + anthranilate. It functions in the pathway amino-acid biosynthesis; L-tryptophan biosynthesis; L-tryptophan from chorismate: step 2/5. Functionally, catalyzes the transfer of the phosphoribosyl group of 5-phosphorylribose-1-pyrophosphate (PRPP) to anthranilate to yield N-(5'-phosphoribosyl)-anthranilate (PRA). The chain is Anthranilate phosphoribosyltransferase from Ruthia magnifica subsp. Calyptogena magnifica.